The chain runs to 163 residues: Transcriptional repressor NrdR (163 aa).

A zinc finger spans residues 3–34; it reads CPFCRHPDSRVVDSRVSDDGSSIRRRRQCPQC. The ATP-cone domain maps to 46–136; that stretch reads LTVIKRSGIG…VYQAFESLDD (91 aa).

The protein belongs to the NrdR family. It depends on Zn(2+) as a cofactor.

Negatively regulates transcription of bacterial ribonucleotide reductase nrd genes and operons by binding to NrdR-boxes. This chain is Transcriptional repressor NrdR, found in Renibacterium salmoninarum (strain ATCC 33209 / DSM 20767 / JCM 11484 / NBRC 15589 / NCIMB 2235).